The following is a 351-amino-acid chain: Pentatricopeptide repeat-containing protein At3g56030, mitochondrial (351 aa).

The transit peptide at 1 to 41 directs the protein to the mitochondrion; it reads MFRLKPLISVDLNQTMSLLRRFVKEANNSRFLLQSISGRSF. PPR repeat units follow at residues 124 to 158, 159 to 193, 194 to 224, and 232 to 266; these read RKHS…EFGL, STCV…AIPV, DVTS…MEEE, and DTRT…GLSV.

The protein belongs to the PPR family. P subfamily.

Its subcellular location is the mitochondrion. The protein is Pentatricopeptide repeat-containing protein At3g56030, mitochondrial of Arabidopsis thaliana (Mouse-ear cress).